The sequence spans 572 residues: [Pyruvate dehydrogenase [acetyl-transferring]]-phosphatase 1, mitochondrial (572 aa).

Residues 95–122 (NTSGNINMPSPNPKGTETQKSQRSQNDQ) form a disordered region. The region spanning 153 to 543 (RYDVAQLPSN…DDLTVTVAFF (391 aa)) is the PPM-type phosphatase domain. Mn(2+)-binding residues include D197, G198, D424, and D480. Basic and acidic residues predominate over residues 470–480 (EAQRPAFRYKD). The tract at residues 470–492 (EAQRPAFRYKDNNSSSPSGSNPE) is disordered. Residues 481-491 (NNSSSPSGSNP) show a composition bias toward low complexity.

The protein belongs to the PP2C family. The cofactor is Mg(2+). Requires Mn(2+) as cofactor. Post-translationally, processed by mitochondrial inner membrane protease (IMP) complex and released to the intermembrane space.

It is found in the mitochondrion intermembrane space. The catalysed reaction is O-phospho-L-seryl-[pyruvate dehydrogenase E1 alpha subunit] + H2O = L-seryl-[pyruvate dehydrogenase E1 alpha subunit] + phosphate. Its function is as follows. Catalyzes the dephosphorylation and concomitant reactivation of the E1 alpha subunit (PDA1) of the pyruvate dehydrogenase complex. The protein is [Pyruvate dehydrogenase [acetyl-transferring]]-phosphatase 1, mitochondrial (PTC5) of Saccharomyces cerevisiae (strain ATCC 204508 / S288c) (Baker's yeast).